Consider the following 101-residue polypeptide: Small ribosomal subunit protein uS14 (101 aa).

Belongs to the universal ribosomal protein uS14 family. In terms of assembly, part of the 30S ribosomal subunit. Contacts proteins S3 and S10.

Binds 16S rRNA, required for the assembly of 30S particles and may also be responsible for determining the conformation of the 16S rRNA at the A site. The chain is Small ribosomal subunit protein uS14 from Shewanella sp. (strain MR-4).